A 122-amino-acid polypeptide reads, in one-letter code: MKEEKRSSTGFLVKQRAFLKLYMITMTEQERLYGLKLLEVLRSEFKEIGFKPNHTEVYRSLHELLDDGILKQIKVKKEGAKLQEVVLYQFKDYEAAKLYKKQLKVELDRCKKLIEKALSDNF.

Homodimer.

Functionally, plays a role in DNA replication and termination (fork arrest mechanism). Two dimers of rtp bind to the two inverted repeat regions (IRI and IRII) present in the termination site. The binding of each dimer is centered on an 8 bp direct repeat. The chain is Replication termination protein (rtp) from Bacillus spizizenii (strain ATCC 23059 / NRRL B-14472 / W23) (Bacillus subtilis subsp. spizizenii).